A 541-amino-acid polypeptide reads, in one-letter code: Exopolysaccharide phosphotransferase SCO6021 (541 aa).

It belongs to the stealth family.

The chain is Exopolysaccharide phosphotransferase SCO6021 from Streptomyces coelicolor (strain ATCC BAA-471 / A3(2) / M145).